Here is a 140-residue protein sequence, read N- to C-terminus: Large ribosomal subunit protein uL15 (140 aa).

A disordered region spans residues 1 to 32; it reads MDTKKFRGSRTCGGGTHKNRRGAGNRGGRGKA.

It belongs to the universal ribosomal protein uL15 family. Part of the 50S ribosomal subunit.

Binds to the 23S rRNA. The sequence is that of Large ribosomal subunit protein uL15 from Methanosarcina acetivorans (strain ATCC 35395 / DSM 2834 / JCM 12185 / C2A).